A 122-amino-acid chain; its full sequence is Large ribosomal subunit protein uL14 (122 aa).

This sequence belongs to the universal ribosomal protein uL14 family. Part of the 50S ribosomal subunit. Forms a cluster with proteins L3 and L19. In the 70S ribosome, L14 and L19 interact and together make contacts with the 16S rRNA in bridges B5 and B8.

Functionally, binds to 23S rRNA. Forms part of two intersubunit bridges in the 70S ribosome. This chain is Large ribosomal subunit protein uL14, found in Syntrophomonas wolfei subsp. wolfei (strain DSM 2245B / Goettingen).